The following is a 280-amino-acid chain: Ribonuclease Z (280 aa).

Zn(2+) contacts are provided by histidine 61, histidine 63, aspartate 65, histidine 66, histidine 153, aspartate 176, and histidine 240. The active-site Proton acceptor is the aspartate 65.

The protein belongs to the RNase Z family. As to quaternary structure, homodimer. The cofactor is Zn(2+).

The catalysed reaction is Endonucleolytic cleavage of RNA, removing extra 3' nucleotides from tRNA precursor, generating 3' termini of tRNAs. A 3'-hydroxy group is left at the tRNA terminus and a 5'-phosphoryl group is left at the trailer molecule.. Functionally, zinc phosphodiesterase, which displays some tRNA 3'-processing endonuclease activity. Probably involved in tRNA maturation, by removing a 3'-trailer from precursor tRNA. This Mycobacterium avium (strain 104) protein is Ribonuclease Z.